Here is a 461-residue protein sequence, read N- to C-terminus: MKMIIIFFILLILNLIKSQQYGPTWDQINSRPLPGWYDDVKFGIFIHFGIYSVPAFANGGYAEWYWWTLKNPSSDGGATQRYHEKEFGANFTYQDFVSRFDCRLFDANEWASIIEKSGAKYVVLTSKHHEGYTLWNSEQSWNWNSVETGPGIDIVGELTKSVKNMGLHMGLYHSLFEWFNPLYLADAETGKNPTTQVYVDEILMKQLKDIVTTYEPELIWADGDWMQLSNYWKSTEFLSWLYTNSSVKDTVIVNDRWGSECRDKNGGFYTGADHFNPYKLQSHKWENCATIGYSYGYDEYEQATDYQNATELIIDLVTTVACGGNFLLDVGPDAQGTIPNNMVDRLLEIGNWLSINSESIYGSSPWRVQNMTFNIWYTTNTTNGNVYAFVFELPDDGVLILSDPIGNNKTEATLLGLKGEKGVEVSLPIESTKPGITLNIPMVAPQDYPPYVYVFRLTDVE.

A signal peptide spans 1-18 (MKMIIIFFILLILNLIKS).

This sequence belongs to the glycosyl hydrolase 29 family.

It carries out the reaction an alpha-L-fucoside + H2O = L-fucose + an alcohol. Functionally, alpha-L-fucosidase is responsible for hydrolyzing the alpha-1,6-linked fucose joined to the reducing-end N-acetylglucosamine of the carbohydrate moieties of glycoproteins. This is Alpha-L-fucosidase (alfA) from Dictyostelium discoideum (Social amoeba).